The sequence spans 152 residues: Small ribosomal subunit protein uS13A (152 aa).

It belongs to the universal ribosomal protein uS13 family. In terms of assembly, component of the small ribosomal subunit (SSU). Mature yeast ribosomes consist of a small (40S) and a large (60S) subunit. The 40S small subunit contains 1 molecule of ribosomal RNA (18S rRNA) and at least 33 different proteins. The large 60S subunit contains 3 rRNA molecules (25S, 5.8S and 5S rRNA) and at least 46 different proteins.

Its subcellular location is the cytoplasm. Functionally, component of the ribosome, a large ribonucleoprotein complex responsible for the synthesis of proteins in the cell. The small ribosomal subunit (SSU) binds messenger RNAs (mRNAs) and translates the encoded message by selecting cognate aminoacyl-transfer RNA (tRNA) molecules. The large subunit (LSU) contains the ribosomal catalytic site termed the peptidyl transferase center (PTC), which catalyzes the formation of peptide bonds, thereby polymerizing the amino acids delivered by tRNAs into a polypeptide chain. The nascent polypeptides leave the ribosome through a tunnel in the LSU and interact with protein factors that function in enzymatic processing, targeting, and the membrane insertion of nascent chains at the exit of the ribosomal tunnel. The chain is Small ribosomal subunit protein uS13A (rps1801) from Schizosaccharomyces pombe (strain 972 / ATCC 24843) (Fission yeast).